The following is a 349-amino-acid chain: Heat-inducible transcription repressor HrcA (349 aa).

This sequence belongs to the HrcA family.

In terms of biological role, negative regulator of class I heat shock genes (grpE-dnaK-dnaJ and groELS operons). Prevents heat-shock induction of these operons. In Xylella fastidiosa (strain M23), this protein is Heat-inducible transcription repressor HrcA.